Here is a 148-residue protein sequence, read N- to C-terminus: Large ribosomal subunit protein uL15 (148 aa).

The segment at 1–46 is disordered; sequence MITIEDLKPTPGSNKKYKRLGRGQGSGKGKTAGKGHKGQKSRGTGK. Residues 31-45 show a composition bias toward basic residues; it reads TAGKGHKGQKSRGTG.

The protein belongs to the universal ribosomal protein uL15 family. Part of the 50S ribosomal subunit.

Binds to the 23S rRNA. The sequence is that of Large ribosomal subunit protein uL15 from Fervidobacterium nodosum (strain ATCC 35602 / DSM 5306 / Rt17-B1).